Reading from the N-terminus, the 344-residue chain is Sesquiterpene synthase 9 (344 aa).

Residues Asp88, Asn224, Ser228, and Glu232 each contribute to the Mg(2+) site. The DDXXD motif signature appears at Asp88–Asp92. Residues Asn224 to Glu232 carry the NSE/DTE motif motif. Residues Arg313 and Tyr314 each coordinate (2E,6E)-farnesyl diphosphate.

It belongs to the terpene synthase family. Mg(2+) is required as a cofactor.

Its function is as follows. Terpene cyclase that catalyzes the cyclization of farnesyl diphosphate (FPP) to a single major sesquiterpene scaffold whose chemical structure is still unknown. This chain is Sesquiterpene synthase 9, found in Postia placenta (strain ATCC 44394 / Madison 698-R) (Brown rot fungus).